A 195-amino-acid chain; its full sequence is Dephospho-CoA kinase (195 aa).

In terms of domain architecture, DPCK spans 4 to 195 (IIGLTGGIAS…EQILDALQRL (192 aa)). 12–17 (ASGKST) is a binding site for ATP.

This sequence belongs to the CoaE family.

The protein localises to the cytoplasm. It catalyses the reaction 3'-dephospho-CoA + ATP = ADP + CoA + H(+). The protein operates within cofactor biosynthesis; coenzyme A biosynthesis; CoA from (R)-pantothenate: step 5/5. Functionally, catalyzes the phosphorylation of the 3'-hydroxyl group of dephosphocoenzyme A to form coenzyme A. The protein is Dephospho-CoA kinase of Streptococcus agalactiae serotype III (strain NEM316).